The chain runs to 263 residues: MTKPPPFPEPDDSETADERQFFAQQKTRKLDTVATLGGTGEAHYHGHRDRLRARYREQGDAALADYDILELILFRLIPRRDTKPIAKELLARFGTLSGVFGAPQHLLQEVKGVGEAVALDLKLIATAAQRTLKSELRNKQVLSSWSAVIDYCHAAMAHETKEQFRILFLDKRNALIADEVQQQGTIDHTPVYPREVVKRALELSATALILAHNHPSGDPTPSRADIEMTKLIAEAAKPLGITVHDHVIIGKDGHVSMKGLRLF.

The MPN domain occupies 141-263; it reads VLSSWSAVID…HVSMKGLRLF (123 aa). The Zn(2+) site is built by histidine 212, histidine 214, and aspartate 225. A JAMM motif motif is present at residues 212–225; the sequence is HNHPSGDPTPSRAD.

This sequence belongs to the UPF0758 family.

The polypeptide is UPF0758 protein NGR_c13970 (Sinorhizobium fredii (strain NBRC 101917 / NGR234)).